The primary structure comprises 501 residues: Ribose import ATP-binding protein RbsA (501 aa).

ABC transporter domains lie at 5–241 (LQLK…VGRK) and 252–495 (APGE…VGKL). An ATP-binding site is contributed by 37–44 (GENGAGKS).

Belongs to the ABC transporter superfamily. Ribose importer (TC 3.A.1.2.1) family. In terms of assembly, the complex is composed of an ATP-binding protein (RbsA), two transmembrane proteins (RbsC) and a solute-binding protein (RbsB).

The protein resides in the cell inner membrane. The enzyme catalyses D-ribose(out) + ATP + H2O = D-ribose(in) + ADP + phosphate + H(+). In terms of biological role, part of the ABC transporter complex RbsABC involved in ribose import. Responsible for energy coupling to the transport system. The protein is Ribose import ATP-binding protein RbsA of Salmonella typhi.